A 647-amino-acid polypeptide reads, in one-letter code: Type II methyltransferase M.FokI (647 aa).

Short sequence motifs (adenine-specific methylase) lie at residues 218–221 (DPPY) and 548–551 (DPPY).

Belongs to the N(4)/N(6)-methyltransferase family. As to quaternary structure, monomer.

It carries out the reaction a 2'-deoxyadenosine in DNA + S-adenosyl-L-methionine = an N(6)-methyl-2'-deoxyadenosine in DNA + S-adenosyl-L-homocysteine + H(+). Functionally, an alpha subtype methylase that recognizes the asymmetric double-stranded sequence 5'-GGATG-3', methylates A-3 of both strands, and protects the DNA from cleavage by the FokI endonuclease. This chain is Type II methyltransferase M.FokI, found in Planomicrobium okeanokoites (Planococcus okeanokoites).